Here is a 213-residue protein sequence, read N- to C-terminus: Embryo-specific protein ATS3 (213 aa).

The signal sequence occupies residues 1–21; it reads MTFPSLSVSFLFFAFIFVTHA. One can recognise a PLAT domain in the interval 34 to 148; sequence CPYTVVVMTS…LNTWYGHNNC (115 aa). The tract at residues 147–188 is disordered; it reads NCNTTGRPSSPDLPPPHFPPEFPPETPTTPPPPPPRPSAASR. N149 carries N-linked (GlcNAc...) asparagine glycosylation. A compositionally biased stretch (pro residues) spans 157 to 183; the sequence is PDLPPPHFPPEFPPETPTTPPPPPPRP.

In terms of tissue distribution, expressed in seeds. Expression is restricted to the developing embryo.

The protein localises to the secreted. Its function is as follows. May play a role during embryo development. The polypeptide is Embryo-specific protein ATS3 (Arabidopsis thaliana (Mouse-ear cress)).